The chain runs to 232 residues: Small ribosomal subunit protein uS2 (232 aa).

Belongs to the universal ribosomal protein uS2 family.

The protein is Small ribosomal subunit protein uS2 of Pelotomaculum thermopropionicum (strain DSM 13744 / JCM 10971 / SI).